Here is a 173-residue protein sequence, read N- to C-terminus: Putative 4-hydroxy-4-methyl-2-oxoglutarate aldolase (173 aa).

Residues 89 to 92 and R111 each bind substrate; that span reads GGNL. D112 lines the a divalent metal cation pocket.

It belongs to the class II aldolase/RraA-like family. In terms of assembly, homotrimer. The cofactor is a divalent metal cation.

The enzyme catalyses 4-hydroxy-4-methyl-2-oxoglutarate = 2 pyruvate. The catalysed reaction is oxaloacetate + H(+) = pyruvate + CO2. Catalyzes the aldol cleavage of 4-hydroxy-4-methyl-2-oxoglutarate (HMG) into 2 molecules of pyruvate. Also contains a secondary oxaloacetate (OAA) decarboxylase activity due to the common pyruvate enolate transition state formed following C-C bond cleavage in the retro-aldol and decarboxylation reactions. This is Putative 4-hydroxy-4-methyl-2-oxoglutarate aldolase from Albidiferax ferrireducens (strain ATCC BAA-621 / DSM 15236 / T118) (Rhodoferax ferrireducens).